Reading from the N-terminus, the 353-residue chain is Serine proteinase inhibitor 1 (353 aa).

This sequence belongs to the serpin family. Poxviruses subfamily.

The protein resides in the host cytoplasm. Its function is as follows. Plays a role in mediating viral host range. May act to inhibit a caspase independent form of apoptosis to allow efficient virus replication in infected cells. This chain is Serine proteinase inhibitor 1 (OPG208), found in Vaccinia virus (strain Copenhagen) (VACV).